Here is a 301-residue protein sequence, read N- to C-terminus: Prohibitin-2 (301 aa).

2 necessary for transcriptional repression regions span residues 19 to 49 (VGTA…GQRA) and 150 to 174 (ASQL…RAKD). Residues 190-237 (SREYTAAVEAKQVAQQEAQRAQFLVEKAKQEQKQKIVQAEGEATAAKM) are a coiled coil.

It belongs to the prohibitin family. As to quaternary structure, the mitochondrial prohibitin complex consists of two subunits (PHB1 and PHB2), assembled into a membrane-associated ring-shaped supercomplex of approximately 1 mDa.

It is found in the mitochondrion inner membrane. Its subcellular location is the cytoplasm. The protein resides in the nucleus. The protein localises to the cell membrane. Functionally, protein with pleiotropic attributes mediated in a cell-compartment- and tissue-specific manner, which include the plasma membrane-associated cell signaling functions, mitochondrial chaperone, and transcriptional co-regulator of transcription factors and sex steroid hormones in the nucleus. In the mitochondria, together with PHB, forms large ring complexes (prohibitin complexes) in the inner mitochondrial membrane (IMM) and functions as a chaperone protein that stabilizes mitochondrial respiratory enzymes and maintains mitochondrial integrity in the IMM, which is required for mitochondrial morphogenesis, neuronal survival, and normal lifespan. Its function is as follows. In the nucleus, serves as transcriptional co-regulator. The chain is Prohibitin-2 (PHB2) from Gallus gallus (Chicken).